Consider the following 417-residue polypeptide: MLEQMGIAAKQASYKLAQLSSREKNRVLEKIADELEAQSEIILNANAQDVADARANGLSEAMLDRLALTPARLKGIADDVRQVCNLADPVGQVIDGGVLDSGLRLERRRVPLGVIGVIYEARPNVTVDVASLCLKTGNAVILRGGKETCRTNAATVAVIQDALKSCDLPAGAVQAIDNPDRALVSEMLRMDKYIDMLIPRGGAGLHKLCREQSTIPVITGGIGVCHIYVDESAEIAEALKVIVNAKTQRPSTCNTVETLLVNKNIADSFLPALSKQMAESGVTLHADAAALAQLQAGPAKVVAVKAEEYDDEFLSLDLNVKIVSDLDDAIAHIREHGTQHSDAILTRDMRNAQRFVNEVDSSAVYVNASTRFTDGGQFGLGAEVAVSTQKLHARGPMGLEALTTYKWIGIGDYTIRA.

This sequence belongs to the gamma-glutamyl phosphate reductase family.

The protein resides in the cytoplasm. The catalysed reaction is L-glutamate 5-semialdehyde + phosphate + NADP(+) = L-glutamyl 5-phosphate + NADPH + H(+). It functions in the pathway amino-acid biosynthesis; L-proline biosynthesis; L-glutamate 5-semialdehyde from L-glutamate: step 2/2. Its function is as follows. Catalyzes the NADPH-dependent reduction of L-glutamate 5-phosphate into L-glutamate 5-semialdehyde and phosphate. The product spontaneously undergoes cyclization to form 1-pyrroline-5-carboxylate. In Escherichia coli (strain SMS-3-5 / SECEC), this protein is Gamma-glutamyl phosphate reductase.